We begin with the raw amino-acid sequence, 26 residues long: Superoxide dismutase [Cu-Zn] (26 aa).

The S-palmitoyl cysteine moiety is linked to residue Cys-7.

Belongs to the Cu-Zn superoxide dismutase family. In terms of assembly, homotrimer. It depends on Cu cation as a cofactor. The cofactor is Zn(2+).

It is found in the cytoplasm. The protein localises to the nucleus. It catalyses the reaction 2 superoxide + 2 H(+) = H2O2 + O2. In terms of biological role, destroys radicals which are normally produced within the cells and which are toxic to biological systems. This is Superoxide dismutase [Cu-Zn] (sod1) from Paralichthys olivaceus (Bastard halibut).